Here is a 177-residue protein sequence, read N- to C-terminus: Peptide methionine sulfoxide reductase MsrA 2 (177 aa).

Cys12 is an active-site residue.

The protein belongs to the MsrA Met sulfoxide reductase family.

It carries out the reaction L-methionyl-[protein] + [thioredoxin]-disulfide + H2O = L-methionyl-(S)-S-oxide-[protein] + [thioredoxin]-dithiol. The catalysed reaction is [thioredoxin]-disulfide + L-methionine + H2O = L-methionine (S)-S-oxide + [thioredoxin]-dithiol. Functionally, has an important function as a repair enzyme for proteins that have been inactivated by oxidation. Catalyzes the reversible oxidation-reduction of methionine sulfoxide in proteins to methionine. The polypeptide is Peptide methionine sulfoxide reductase MsrA 2 (msrA2) (Staphylococcus aureus (strain Mu50 / ATCC 700699)).